The following is a 622-amino-acid chain: Carbon monoxide dehydrogenase (622 aa).

[4Fe-4S] cluster-binding residues include Cys40, Cys49, Cys52, Cys57, and Cys68. [Ni-4Fe-5S] cluster-binding residues include His256, Cys334, Cys442, Cys473, and Cys514.

This sequence belongs to the Ni-containing carbon monoxide dehydrogenase family. Homodimer. The cofactor is [4Fe-4S] cluster. Requires [Ni-4Fe-5S] cluster as cofactor.

The catalysed reaction is CO + 2 oxidized [2Fe-2S]-[ferredoxin] + H2O = 2 reduced [2Fe-2S]-[ferredoxin] + CO2 + 2 H(+). Its function is as follows. CODH oxidizes carbon monoxide coupled, via CooF, to the reduction of a hydrogen cation by a hydrogenase (possibly CooH). The sequence is that of Carbon monoxide dehydrogenase (cooS) from Archaeoglobus fulgidus (strain ATCC 49558 / DSM 4304 / JCM 9628 / NBRC 100126 / VC-16).